The following is a 308-amino-acid chain: Pseudouridine-5'-phosphate glycosidase (308 aa).

The active-site Proton donor is the glutamate 28. Substrate-binding residues include lysine 89 and valine 109. Residue aspartate 141 participates in Mn(2+) binding. Substrate is bound at residue 143-145 (SAD). The active-site Nucleophile is lysine 162.

This sequence belongs to the pseudouridine-5'-phosphate glycosidase family. As to quaternary structure, homotrimer. Requires Mn(2+) as cofactor.

The enzyme catalyses D-ribose 5-phosphate + uracil = psi-UMP + H2O. In terms of biological role, catalyzes the reversible cleavage of pseudouridine 5'-phosphate (PsiMP) to ribose 5-phosphate and uracil. Functions biologically in the cleavage direction, as part of a pseudouridine degradation pathway. This Brachyspira hyodysenteriae (strain ATCC 49526 / WA1) protein is Pseudouridine-5'-phosphate glycosidase.